The sequence spans 396 residues: Argininosuccinate synthase (396 aa).

ATP is bound by residues 10–18 (AYSGGLDTS) and Ala37. Positions 88 and 93 each coordinate L-citrulline. Gly118 is a binding site for ATP. L-aspartate-binding residues include Thr120, Asn124, and Asp125. Residue Asn124 coordinates L-citrulline. L-citrulline contacts are provided by Arg128, Ser176, Ser185, Glu261, and Tyr273.

It belongs to the argininosuccinate synthase family. Type 1 subfamily. Homotetramer.

It is found in the cytoplasm. The enzyme catalyses L-citrulline + L-aspartate + ATP = 2-(N(omega)-L-arginino)succinate + AMP + diphosphate + H(+). It functions in the pathway amino-acid biosynthesis; L-arginine biosynthesis; L-arginine from L-ornithine and carbamoyl phosphate: step 2/3. This Nitratidesulfovibrio vulgaris (strain ATCC 29579 / DSM 644 / CCUG 34227 / NCIMB 8303 / VKM B-1760 / Hildenborough) (Desulfovibrio vulgaris) protein is Argininosuccinate synthase.